The following is a 268-amino-acid chain: Protein APE_1980.1 (268 aa).

Belongs to the CinA family.

The protein is Protein APE_1980.1 of Aeropyrum pernix (strain ATCC 700893 / DSM 11879 / JCM 9820 / NBRC 100138 / K1).